The chain runs to 220 residues: Deoxyribose-phosphate aldolase (220 aa).

D92 functions as the Proton donor/acceptor in the catalytic mechanism. K155 acts as the Schiff-base intermediate with acetaldehyde in catalysis. The active-site Proton donor/acceptor is the K184.

The protein belongs to the DeoC/FbaB aldolase family. DeoC type 1 subfamily.

The protein localises to the cytoplasm. It carries out the reaction 2-deoxy-D-ribose 5-phosphate = D-glyceraldehyde 3-phosphate + acetaldehyde. The protein operates within carbohydrate degradation; 2-deoxy-D-ribose 1-phosphate degradation; D-glyceraldehyde 3-phosphate and acetaldehyde from 2-deoxy-alpha-D-ribose 1-phosphate: step 2/2. Its function is as follows. Catalyzes a reversible aldol reaction between acetaldehyde and D-glyceraldehyde 3-phosphate to generate 2-deoxy-D-ribose 5-phosphate. This is Deoxyribose-phosphate aldolase from Natranaerobius thermophilus (strain ATCC BAA-1301 / DSM 18059 / JW/NM-WN-LF).